We begin with the raw amino-acid sequence, 230 residues long: Large ribosomal subunit protein uL1 (230 aa).

It belongs to the universal ribosomal protein uL1 family. As to quaternary structure, part of the 50S ribosomal subunit.

Its function is as follows. Binds directly to 23S rRNA. The L1 stalk is quite mobile in the ribosome, and is involved in E site tRNA release. In terms of biological role, protein L1 is also a translational repressor protein, it controls the translation of the L11 operon by binding to its mRNA. The polypeptide is Large ribosomal subunit protein uL1 (Leptospira borgpetersenii serovar Hardjo-bovis (strain JB197)).